The chain runs to 315 residues: Cyclin-dependent kinase B2-2 (315 aa).

The 291-residue stretch at 16 to 306 (FEKLEKVGEG…AKKAMEHPYF (291 aa)) folds into the Protein kinase domain. Residues 22–30 (VGEGTYGKV) and Lys-45 each bind ATP. Phosphotyrosine is present on Tyr-27. Asp-147 (proton acceptor) is an active-site residue. Thr-181 carries the phosphothreonine modification.

The protein belongs to the protein kinase superfamily. CMGC Ser/Thr protein kinase family. CDC2/CDKX subfamily. As to expression, expressed in flowers.

It carries out the reaction L-seryl-[protein] + ATP = O-phospho-L-seryl-[protein] + ADP + H(+). The enzyme catalyses L-threonyl-[protein] + ATP = O-phospho-L-threonyl-[protein] + ADP + H(+). It catalyses the reaction [DNA-directed RNA polymerase] + ATP = phospho-[DNA-directed RNA polymerase] + ADP + H(+). In Arabidopsis thaliana (Mouse-ear cress), this protein is Cyclin-dependent kinase B2-2 (CDKB2-2).